Reading from the N-terminus, the 445-residue chain is Phosphoglucosamine mutase (445 aa).

The Phosphoserine intermediate role is filled by S102. Positions 102, 241, 243, and 245 each coordinate Mg(2+). A Phosphoserine modification is found at S102.

It belongs to the phosphohexose mutase family. Mg(2+) is required as a cofactor. Post-translationally, activated by phosphorylation.

The catalysed reaction is alpha-D-glucosamine 1-phosphate = D-glucosamine 6-phosphate. In terms of biological role, catalyzes the conversion of glucosamine-6-phosphate to glucosamine-1-phosphate. The sequence is that of Phosphoglucosamine mutase from Salmonella paratyphi A (strain ATCC 9150 / SARB42).